The sequence spans 95 residues: Small ribosomal subunit protein uS15 (95 aa).

This sequence belongs to the universal ribosomal protein uS15 family. As to quaternary structure, part of the 30S ribosomal subunit. Forms a bridge to the 50S subunit in the 70S ribosome, contacting the 23S rRNA.

Functionally, one of the primary rRNA binding proteins, it binds directly to 16S rRNA where it helps nucleate assembly of the platform of the 30S subunit by binding and bridging several RNA helices of the 16S rRNA. Forms an intersubunit bridge (bridge B4) with the 23S rRNA of the 50S subunit in the ribosome. The polypeptide is Small ribosomal subunit protein uS15 (Streptomyces coelicolor (strain ATCC BAA-471 / A3(2) / M145)).